The chain runs to 513 residues: Protein disulfide-isomerase (513 aa).

Positions M1 to A25 are cleaved as a signal peptide. The Thioredoxin 1 domain maps to E26 to G149. Residues C67 and C70 each act as nucleophile in the active site. C67 and C70 are oxidised to a cystine. N282 is a glycosylation site (N-linked (GlcNAc...) asparagine). A Thioredoxin 2 domain is found at F369–E488. Catalysis depends on nucleophile residues C411 and C414. C411 and C414 are oxidised to a cystine. The segment covering G491–E507 has biased composition (low complexity). The interval G491–L513 is disordered. Residues K510–L513 carry the Prevents secretion from ER motif.

This sequence belongs to the protein disulfide isomerase family.

Its subcellular location is the endoplasmic reticulum lumen. The enzyme catalyses Catalyzes the rearrangement of -S-S- bonds in proteins.. Its function is as follows. Participates in the folding of proteins containing disulfide bonds, may be involved in glycosylation, prolyl hydroxylation and triglyceride transfer. The sequence is that of Protein disulfide-isomerase (PDI) from Hordeum vulgare (Barley).